Reading from the N-terminus, the 410-residue chain is Polyadenylation and cleavage factor homolog 5 (410 aa).

Residues 1 to 17 (MASNGSFSAQRNANAGT) show a composition bias toward polar residues. Residues 1–32 (MASNGSFSAQRNANAGTTMKRRNDNRGYGGGI) are disordered. Residues 191–214 (SKELTDLLSLLNNEKEKKTSEASN) adopt a coiled-coil conformation. The segment at 247-269 (RQCTSCGVRFKCQEEHSKHMDWH) adopts a C2H2-type zinc-finger fold.

In terms of assembly, forms a complex with cleavage and polyadenylation specificity factor (CPSF) subunits CSTF77, CLPS3, PCFS4 and PCFS1.

It is found in the nucleus. The sequence is that of Polyadenylation and cleavage factor homolog 5 from Arabidopsis thaliana (Mouse-ear cress).